The primary structure comprises 216 residues: MSTPYYPHPIIAREGWPFIAGAFAVALLVQFMAGWLWALPFWLIALFVLQFFRDPPRVVPALAGAVLAPADGRIVAVDKVQDPYLPREALKVSVFMNVFNVHSNRSPVDGEIRNRWYFPGNFLNASLPKASLENERNALWIRTDGGQDVTCVQIAGLIAKRIVCHVHPGEHLARGQRFGFIRFGSRVDVYLPLGTKVNVAIGDKVYATQTVLAEFH.

Ser-185 serves as the catalytic Schiff-base intermediate with substrate; via pyruvic acid. Ser-185 bears the Pyruvic acid (Ser); by autocatalysis mark.

It belongs to the phosphatidylserine decarboxylase family. PSD-A subfamily. Heterodimer of a large membrane-associated beta subunit and a small pyruvoyl-containing alpha subunit. Pyruvate is required as a cofactor. Post-translationally, is synthesized initially as an inactive proenzyme. Formation of the active enzyme involves a self-maturation process in which the active site pyruvoyl group is generated from an internal serine residue via an autocatalytic post-translational modification. Two non-identical subunits are generated from the proenzyme in this reaction, and the pyruvate is formed at the N-terminus of the alpha chain, which is derived from the carboxyl end of the proenzyme. The post-translation cleavage follows an unusual pathway, termed non-hydrolytic serinolysis, in which the side chain hydroxyl group of the serine supplies its oxygen atom to form the C-terminus of the beta chain, while the remainder of the serine residue undergoes an oxidative deamination to produce ammonia and the pyruvoyl prosthetic group on the alpha chain.

The protein resides in the cell membrane. It carries out the reaction a 1,2-diacyl-sn-glycero-3-phospho-L-serine + H(+) = a 1,2-diacyl-sn-glycero-3-phosphoethanolamine + CO2. It participates in phospholipid metabolism; phosphatidylethanolamine biosynthesis; phosphatidylethanolamine from CDP-diacylglycerol: step 2/2. Functionally, catalyzes the formation of phosphatidylethanolamine (PtdEtn) from phosphatidylserine (PtdSer). This Nitrosomonas europaea (strain ATCC 19718 / CIP 103999 / KCTC 2705 / NBRC 14298) protein is Phosphatidylserine decarboxylase proenzyme.